The primary structure comprises 718 residues: Peroxisomal bifunctional enzyme (718 aa).

Residues 1–280 (MAEYLRLPHS…FAEKSANKWS (280 aa)) form an enoyl-CoA hydratase / isomerase region. Position 38 is an N6-succinyllysine (Lys38). Gly99 provides a ligand contact to substrate. An N6-acetyllysine; alternate mark is found at Lys163 and Lys172. 2 positions are modified to N6-succinyllysine; alternate: Lys163 and Lys172. Lys181 is subject to N6-succinyllysine. N6-acetyllysine; alternate is present on residues Lys189 and Lys217. Lys189 and Lys217 each carry N6-succinyllysine; alternate. The residue at position 240 (Lys240) is an N6-succinyllysine. Residue Lys248 is modified to N6-acetyllysine. Lys252 bears the N6-succinyllysine mark. Lys274 carries the post-translational modification N6-acetyllysine; alternate. Lys274 is modified (N6-succinyllysine; alternate). N6-succinyllysine is present on residues Lys278, Lys288, and Lys329. Residues 281 to 567 (TPSGASWKTA…DMLCEAGRFG (287 aa)) form a 3-hydroxyacyl-CoA dehydrogenase region. 4 positions are modified to N6-acetyllysine: Lys344, Lys348, Lys355, and Lys459. Lys527 is modified (N6-succinyllysine). The residue at position 543 (Thr543) is a Phosphothreonine. Position 572 is an N6-succinyllysine (Lys572). 3 positions are modified to N6-acetyllysine; alternate: Lys579, Lys586, and Lys705. Lys579, Lys586, and Lys705 each carry N6-succinyllysine; alternate. The short motif at 716-718 (SKL) is the Microbody targeting signal element. Lys717 is subject to N6-succinyllysine.

In the N-terminal section; belongs to the enoyl-CoA hydratase/isomerase family. The protein in the C-terminal section; belongs to the 3-hydroxyacyl-CoA dehydrogenase family. In terms of assembly, monomer. Post-translationally, acetylated, leading to enhanced enzyme activity. Acetylation is enhanced by up to 80% after treatment either with trichostin A (TCA) or with nicotinamide (NAM) with highest increase on Lys-344. Acetylation and enzyme activity increased by about 1.5% on addition of fatty acids.

It is found in the peroxisome. The catalysed reaction is a (3S)-3-hydroxyacyl-CoA = a (2E)-enoyl-CoA + H2O. It carries out the reaction a 4-saturated-(3S)-3-hydroxyacyl-CoA = a (3E)-enoyl-CoA + H2O. The enzyme catalyses a (3Z)-enoyl-CoA = a 4-saturated (2E)-enoyl-CoA. It catalyses the reaction a (3E)-enoyl-CoA = a 4-saturated (2E)-enoyl-CoA. The catalysed reaction is a (3S)-3-hydroxyacyl-CoA + NAD(+) = a 3-oxoacyl-CoA + NADH + H(+). It carries out the reaction (2S,3S)-3-hydroxy-2-methylbutanoyl-CoA = (2E)-2-methylbut-2-enoyl-CoA + H2O. The enzyme catalyses (2E)-dodecenedioyl-CoA + H2O = (3S)-hydroxydodecanedioyl-CoA. It catalyses the reaction (3S)-hydroxydodecanedioyl-CoA + NAD(+) = 3-oxododecanedioyl-CoA + NADH + H(+). The catalysed reaction is (2E)-octenedioyl-CoA + H2O = (3S)-hydroxyoctanedioyl-CoA. It carries out the reaction (3S)-hydroxyoctanedioyl-CoA + NAD(+) = 3-oxooctanedioyl-CoA + NADH + H(+). The enzyme catalyses (2E)-decenedioyl-CoA + H2O = (3S)-hydroxydecanedioyl-CoA. It catalyses the reaction (3S)-hydroxydecanedioyl-CoA + NAD(+) = 3-oxodecanedioyl-CoA + NADH + H(+). The catalysed reaction is (2E)-tetradecenedioyl-CoA + H2O = (3S)-hydroxytetradecanedioyl-CoA. It carries out the reaction (3S)-hydroxytetradecanedioyl-CoA + NAD(+) = 3-oxotetradecanedioyl-CoA + NADH + H(+). The enzyme catalyses (3E,5Z)-tetradecadienoyl-CoA = (2E,5Z)-tetradecadienoyl-CoA. It catalyses the reaction (3E,5Z)-octadienoyl-CoA = (2E,5Z)-octadienoyl-CoA. The catalysed reaction is (3S)-hydroxydecanoyl-CoA + NAD(+) = 3-oxodecanoyl-CoA + NADH + H(+). It carries out the reaction (3E)-decenoyl-CoA = (2E)-decenoyl-CoA. The enzyme catalyses (3Z)-hexenoyl-CoA = (2E)-hexenoyl-CoA. It catalyses the reaction (3E)-hexenoyl-CoA = (2E)-hexenoyl-CoA. The catalysed reaction is (3S)-hydroxydecanoyl-CoA = (2E)-decenoyl-CoA + H2O. It carries out the reaction (3S)-hydroxyhexanoyl-CoA = (2E)-hexenoyl-CoA + H2O. The enzyme catalyses (3S)-hydroxyhexadecanoyl-CoA + NAD(+) = 3-oxohexadecanoyl-CoA + NADH + H(+). It catalyses the reaction (3S)-hydroxyhexadecanoyl-CoA = (2E)-hexadecenoyl-CoA + H2O. The catalysed reaction is (2E)-hexadecenedioyl-CoA + H2O = (3S)-hydroxyhexadecanedioyl-CoA. It carries out the reaction (3S)-hydroxyhexadecanedioyl-CoA + NAD(+) = 3-oxohexadecanedioyl-CoA + NADH + H(+). Its pathway is lipid metabolism; fatty acid beta-oxidation. Its activity is regulated as follows. Enzyme activity enhanced by acetylation. In terms of biological role, peroxisomal trifunctional enzyme possessing 2-enoyl-CoA hydratase, 3-hydroxyacyl-CoA dehydrogenase, and delta 3, delta 2-enoyl-CoA isomerase activities. Catalyzes two of the four reactions of the long chain fatty acids peroxisomal beta-oxidation pathway. Can also use branched-chain fatty acids such as 2-methyl-2E-butenoyl-CoA as a substrate, which is hydrated into (2S,3S)-3-hydroxy-2-methylbutanoyl-CoA. Optimal isomerase for 2,5 double bonds into 3,5 form isomerization in a range of enoyl-CoA species. Also able to isomerize both 3-cis and 3-trans double bonds into the 2-trans form in a range of enoyl-CoA species. With HSD17B4, catalyzes the hydration of trans-2-enoyl-CoA and the dehydrogenation of 3-hydroxyacyl-CoA, but with opposite chiral specificity. Regulates the amount of medium-chain dicarboxylic fatty acids which are essential regulators of all fatty acid oxidation pathways. Also involved in the degradation of long-chain dicarboxylic acids through peroxisomal beta-oxidation. This chain is Peroxisomal bifunctional enzyme, found in Mus musculus (Mouse).